We begin with the raw amino-acid sequence, 318 residues long: Probable major capsid protein gp17 (318 aa).

It belongs to the L5likevirus major capsid protein gp17 family.

Its subcellular location is the virion. The polypeptide is Probable major capsid protein gp17 (17) (Mycobacterium (Mycobacteriophage D29)).